Here is a 379-residue protein sequence, read N- to C-terminus: UDP-N-acetylglucosamine--N-acetylmuramyl-(pentapeptide) pyrophosphoryl-undecaprenol N-acetylglucosamine transferase (379 aa).

Residues 10–12 (TAG), asparagine 124, arginine 161, serine 195, and glutamine 291 each bind UDP-N-acetyl-alpha-D-glucosamine.

It belongs to the glycosyltransferase 28 family. MurG subfamily.

It is found in the cell membrane. It catalyses the reaction di-trans,octa-cis-undecaprenyl diphospho-N-acetyl-alpha-D-muramoyl-L-alanyl-D-glutamyl-meso-2,6-diaminopimeloyl-D-alanyl-D-alanine + UDP-N-acetyl-alpha-D-glucosamine = di-trans,octa-cis-undecaprenyl diphospho-[N-acetyl-alpha-D-glucosaminyl-(1-&gt;4)]-N-acetyl-alpha-D-muramoyl-L-alanyl-D-glutamyl-meso-2,6-diaminopimeloyl-D-alanyl-D-alanine + UDP + H(+). It functions in the pathway cell wall biogenesis; peptidoglycan biosynthesis. Its function is as follows. Cell wall formation. Catalyzes the transfer of a GlcNAc subunit on undecaprenyl-pyrophosphoryl-MurNAc-pentapeptide (lipid intermediate I) to form undecaprenyl-pyrophosphoryl-MurNAc-(pentapeptide)GlcNAc (lipid intermediate II). This chain is UDP-N-acetylglucosamine--N-acetylmuramyl-(pentapeptide) pyrophosphoryl-undecaprenol N-acetylglucosamine transferase, found in Thermobifida fusca (strain YX).